Here is a 121-residue protein sequence, read N- to C-terminus: Large ribosomal subunit protein bL21c (121 aa).

Belongs to the bacterial ribosomal protein bL21 family. In terms of assembly, part of the 50S ribosomal subunit.

It localises to the plastid. Its subcellular location is the chloroplast. Its function is as follows. This protein binds to 23S rRNA. The chain is Large ribosomal subunit protein bL21c from Huperzia lucidula (Shining clubmoss).